Reading from the N-terminus, the 254-residue chain is Type III pantothenate kinase (254 aa).

6–13 (DVGNTNTV) lines the ATP pocket. Residues tyrosine 100 and 107-110 (GADR) contribute to the substrate site. The active-site Proton acceptor is the aspartate 109. A K(+)-binding site is contributed by aspartate 129. ATP is bound at residue threonine 132. Substrate is bound at residue threonine 184.

It belongs to the type III pantothenate kinase family. As to quaternary structure, homodimer. NH4(+) serves as cofactor. The cofactor is K(+).

It is found in the cytoplasm. The catalysed reaction is (R)-pantothenate + ATP = (R)-4'-phosphopantothenate + ADP + H(+). It functions in the pathway cofactor biosynthesis; coenzyme A biosynthesis; CoA from (R)-pantothenate: step 1/5. Catalyzes the phosphorylation of pantothenate (Pan), the first step in CoA biosynthesis. The sequence is that of Type III pantothenate kinase from Anaeromyxobacter sp. (strain Fw109-5).